The following is a 976-amino-acid chain: Chitin synthase 3A (976 aa).

The tract at residues 29–72 (DDANASNRSPVSNPYEPDYDQLSPPPMLGAQRPVPEQNESSRDL) is disordered. The span at 31-40 (ANASNRSPVS) shows a compositional bias: polar residues. N-linked (GlcNAc...) asparagine glycans are attached at residues Asn32, Asn66, Asn95, and Asn602. Transmembrane regions (helical) follow at residues 639-659 (LLNVLFSWFSLAAFYLTTTII), 684-704 (IVNVLIKYIYIAFLVLQFVLA), 717-737 (VLSFMVFGLIQLYLLVLTGYL), 773-793 (LIIIALITIYGLNYIASFLYL), 801-821 (SFPQYLVLMSTYINILMVYAF), 903-923 (TGLVILWLLCNIVLITFVTTD), and 944-964 (FLLYSTGVLSIVRFIGFLWFI).

This sequence belongs to the chitin synthase family. Class III subfamily.

Its subcellular location is the cell membrane. It carries out the reaction [(1-&gt;4)-N-acetyl-beta-D-glucosaminyl](n) + UDP-N-acetyl-alpha-D-glucosamine = [(1-&gt;4)-N-acetyl-beta-D-glucosaminyl](n+1) + UDP + H(+). Polymerizes chitin, a structural polymer of the cell wall and septum, by transferring the sugar moiety of UDP-GlcNAc to the non-reducing end of the growing chitin polymer. Shows additive effects in septum formation with CHS1, CHS2, CHS4, CHS5, CHS6 and CHS7. Involved in virulence and mediates mycotoxin deoxinivalenol (DON) biosynthesis via the regulation of the expression of TRI4, TRI5 and TRI6. This chain is Chitin synthase 3A, found in Gibberella zeae (strain ATCC MYA-4620 / CBS 123657 / FGSC 9075 / NRRL 31084 / PH-1) (Wheat head blight fungus).